Here is a 545-residue protein sequence, read N- to C-terminus: Calcium-binding mitochondrial carrier SAL1 (545 aa).

The EF-hand 1 domain occupies 11 to 46 (QRDIRYACLFKELDVKGNGQVTLDNLISAFEKNDHP). Ca(2+) contacts are provided by Lys-65, Asp-70, Asp-93, Asp-95, Asp-97, Lys-99, and Glu-104. EF-hand domains lie at 80 to 115 (NAESQIWNGFQRIDLDHDGKIGINEINRYLSDLDNQ), 120 to 155 (NELNHELSNEKMNKFSRFFEWAFPKRKANIALRGQA), and 156 to 191 (SHKKNTDNDRSKKTTDSDLYVTYDQWRDFLLLVPRK). Positions 161 and 166 each coordinate Ca(2+). Solcar repeat units follow at residues 225–332 (IRGF…TKKI), 345–434 (LSKF…LKKW), and 452–541 (LSNL…LKKF). Helical transmembrane passes span 231–248 (FIAGGISGVISRTCTAPF), 307–326 (GNGLNVIKVFPESSIKFGSF), 355–368 (GLAGMAAQFSVYPI), 409–428 (GVTVGIVGIFPYAALDLGTF), 458–475 (LPMGAFSGTVGASVVYPI), and 516–535 (GLVPTLAKVCPAVSISYLCY).

It belongs to the mitochondrial carrier (TC 2.A.29) family.

The protein resides in the mitochondrion inner membrane. Calcium-dependent mitochondrial solute carrier. In Saccharomyces cerevisiae (Baker's yeast), this protein is Calcium-binding mitochondrial carrier SAL1 (SAL1).